Consider the following 420-residue polypeptide: Gamma-glutamyl phosphate reductase (420 aa).

It belongs to the gamma-glutamyl phosphate reductase family.

Its subcellular location is the cytoplasm. It catalyses the reaction L-glutamate 5-semialdehyde + phosphate + NADP(+) = L-glutamyl 5-phosphate + NADPH + H(+). Its pathway is amino-acid biosynthesis; L-proline biosynthesis; L-glutamate 5-semialdehyde from L-glutamate: step 2/2. In terms of biological role, catalyzes the NADPH-dependent reduction of L-glutamate 5-phosphate into L-glutamate 5-semialdehyde and phosphate. The product spontaneously undergoes cyclization to form 1-pyrroline-5-carboxylate. The chain is Gamma-glutamyl phosphate reductase from Neisseria meningitidis serogroup B (strain ATCC BAA-335 / MC58).